Reading from the N-terminus, the 157-residue chain is Crossover junction endodeoxyribonuclease RuvC (157 aa).

Catalysis depends on residues D7, E67, and D140. Mg(2+) is bound by residues D7, E67, and D140.

It belongs to the RuvC family. Homodimer which binds Holliday junction (HJ) DNA. The HJ becomes 2-fold symmetrical on binding to RuvC with unstacked arms; it has a different conformation from HJ DNA in complex with RuvA. In the full resolvosome a probable DNA-RuvA(4)-RuvB(12)-RuvC(2) complex forms which resolves the HJ. The cofactor is Mg(2+).

The protein resides in the cytoplasm. It catalyses the reaction Endonucleolytic cleavage at a junction such as a reciprocal single-stranded crossover between two homologous DNA duplexes (Holliday junction).. Its function is as follows. The RuvA-RuvB-RuvC complex processes Holliday junction (HJ) DNA during genetic recombination and DNA repair. Endonuclease that resolves HJ intermediates. Cleaves cruciform DNA by making single-stranded nicks across the HJ at symmetrical positions within the homologous arms, yielding a 5'-phosphate and a 3'-hydroxyl group; requires a central core of homology in the junction. The consensus cleavage sequence is 5'-(A/T)TT(C/G)-3'. Cleavage occurs on the 3'-side of the TT dinucleotide at the point of strand exchange. HJ branch migration catalyzed by RuvA-RuvB allows RuvC to scan DNA until it finds its consensus sequence, where it cleaves and resolves the cruciform DNA. This is Crossover junction endodeoxyribonuclease RuvC from Rickettsia massiliae (strain Mtu5).